The primary structure comprises 1669 residues: Polycomb group protein Asx (1669 aa).

Positions 90-109 (IPPEKKPMAPSEEAAVSTAP) are disordered. The region spanning 215–338 (PDSILASTNL…FEPFWGEKNS (124 aa)) is the DEUBAD domain. Short sequence motifs (LXXLL motif) lie at residues 224–228 (LRALL) and 244–248 (LIQLL). Residues 283–285 (NEF) carry the NEF motif motif. Residues 336 to 352 (KNSRGKDKDKLESDCKN) are compositionally biased toward basic and acidic residues. 8 disordered regions span residues 336–378 (KNSR…QQAT), 410–478 (SSTF…IVPN), 635–718 (FFTS…SAGA), 952–972 (MPHQASQQPQQNAQSNAQQQR), 1174–1193 (QQQSPPVPAPQQQTVQQQQL), 1398–1437 (PGPGGATATAQQLQMLQQHHQSTTSPVPVQNPQQPAPEQL), 1482–1505 (LHSINGIPMGGRGRPASVDTTAGS), and 1587–1610 (SPTAAPSPINQQPQSQPTGTQHQH). 3 stretches are compositionally biased toward polar residues: residues 367-378 (ATSQQKPLQQAT), 413-425 (FPPTGSQNNVLNE), and 434-450 (PSSSPSQRKQAPTTIAT). The segment covering 465-474 (KDSKQPKMDE) has biased composition (basic and acidic residues). Over residues 635 to 650 (FFTSSSSSNTATTAAN) the composition is skewed to low complexity. The segment covering 651-661 (KLEEHSDKPED) has biased composition (basic and acidic residues). Low complexity predominate over residues 666-718 (IASSISGSTPASSITSTSCTSSSSSSASMSSSCSSSNSGSTTTAPTTSSSAGA). Low complexity-rich tracts occupy residues 1174 to 1192 (QQQSPPVPAPQQQTVQQQQ) and 1404 to 1436 (TATAQQLQMLQQHHQSTTSPVPVQNPQQPAPEQ). The span at 1592–1610 (PSPINQQPQSQPTGTQHQH) shows a compositional bias: low complexity. A PHD-type; atypical zinc finger spans residues 1602 to 1666 (QPTGTQHQHP…IGAAKLCVAC (65 aa)).

This sequence belongs to the Asx family. Component of the polycomb repressive deubiquitinase (PR-DUB) complex, at least composed of caly/calypso, Asx and sba (MBD5/6 homolog). Interacts (via DEUBAD domain) with caly/calypso (via ULD domain); the interaction produces a stable heterodimer with a composite binding site for ubiquitin. Two copies of the caly-Asx heterodimer assemble into a bidentate tetramer. Interacts (via PHD domain) with sba (probably via MBD domain); the interaction is important for the stability of the PR-DUB complex. Interacts with tant. Interacts with cyclin CycG. As to expression, highly expressed in nurse cells and deposited in oocytes late in oogenesis. Ubiquitous in early embryos. Late embryos show higher levels in CNS and neurectoderm.

Its subcellular location is the nucleus. It localises to the chromosome. Non-catalytic component of the polycomb repressive deubiquitinase (PR-DUB) complex, a complex that specifically mediates deubiquitination of histone H2A monoubiquitinated at 'Lys-119' (H2AK118ub1). Activator of the PR-DUB complex involved in ubiquitin binding and allosteric activation of calypso deubiquitinase activity. PR-DUB does not deubiquitinate monoubiquitinated histone H2B. PR-DUB is required to maintain the transcriptionally repressive state of homeotic genes throughout development. The PR-DUB complex has weak or no activity toward 'Lys-48'- and 'Lys-63'-linked polyubiquitin chains. Atypical Polycomb group protein, which may be involved in both Polycomb group (PcG) and trithorax group (trxG) complexes. PcG and trxG proteins act by forming multiprotein complexes, which are respectively required to maintain the transcriptionally repressive and transcriptionally active state of homeotic genes throughout development. PcG and trxG protein complexes are not required to initiate repression and activation, but to maintain it during later stages of development. The polypeptide is Polycomb group protein Asx (Drosophila melanogaster (Fruit fly)).